A 474-amino-acid polypeptide reads, in one-letter code: Nitrosuccinate lyase (474 aa).

Ser295 serves as the catalytic Proton acceptor. Residues Lys301 and Asn303 each coordinate fumarate. Arg334 serves as the catalytic Proton donor.

Belongs to the class-II fumarase/aspartase family.

It catalyses the reaction 2-nitrobutanedioate = fumarate + nitrite + H(+). In terms of biological role, involved in the biosynthesis of desferrioxamine derivatives which have iron-binding properties and may act as siderophores. Catalyzes the formation of nitrous acid from nitrosuccinic acid (2-nitrobutanedioate) by elimination of its nitro group. The chain is Nitrosuccinate lyase from Streptomyces davaonensis (strain DSM 101723 / JCM 4913 / KCC S-0913 / 768).